The following is a 104-amino-acid chain: Protein EPIDERMAL PATTERNING FACTOR 1 (104 aa).

Residues 1 to 20 (MKSLLLLAFFLSFFFGSLLA) form the signal peptide. 4 disulfide bridges follow: Cys60–Cys94, Cys64–Cys70, Cys67–Cys96, and Cys79–Cys88. N-linked (GlcNAc...) asparagine glycosylation occurs at Asn98.

It belongs to the plant cysteine rich small secretory peptide family. Epidermal patterning factor subfamily. In terms of assembly, interacts with ERECTA and ERL1, but not with TMM. Expressed in shoots, but not in roots. Mostly localized in developing leaves, specifically in meristemoids, guard mother cells (GMCs), and young guard cells.

The protein localises to the secreted. In terms of biological role, controls stomatal patterning. Regulates asymmetric cell division during guard cell differentiation. Mediates stomatal development inhibition. Not cleaved by the protease CRSP (AC Q9LNU1). MEPF1: mobile signal controlling stomatal development in a non-cell-autonomous manner. Uses ERL1 as major receptor. May act by competing with somatogen (AC Q9SV72) for the same receptor, TMM (AC Q9SSD1). The polypeptide is Protein EPIDERMAL PATTERNING FACTOR 1 (Arabidopsis thaliana (Mouse-ear cress)).